Consider the following 842-residue polypeptide: Leucine--tRNA ligase (842 aa).

Positions 44 to 55 (PYPSANGLHVGH) match the 'HIGH' region motif. Residues 619–623 (KMSKS) carry the 'KMSKS' region motif. K622 lines the ATP pocket.

It belongs to the class-I aminoacyl-tRNA synthetase family.

Its subcellular location is the cytoplasm. The catalysed reaction is tRNA(Leu) + L-leucine + ATP = L-leucyl-tRNA(Leu) + AMP + diphosphate. This chain is Leucine--tRNA ligase, found in Borrelia duttonii (strain Ly).